We begin with the raw amino-acid sequence, 2009 residues long: MSEQNSVVNAEKGDGEISSNVETASSVNPSVKPQNAIKEEAKETNGEDQKCKGPENAGSTAETKETSNDATNGMKTPEETEDTNDKRHDDEGEDGDEDEDEDEDEDEDNGDEDDEDVDSSSSETSSEDGEDSESVSGESTESSSGEDEESDESDGNTSNSSSGDESGSEEEEEEEEEEEEEENAGEPAIAHQDSVPTNDSTAPRSTHTRNISLSSNGSNTNSTIILVKTTLETILNDKDIKKNSNAQKAIERTLQKFKEFDPQTTNNPHYVDSILVFEALRASCRTKSSKVQSLALDCLSKLFSFRSLDETLLVNPPDSLASNDQRQDAADGITPPPKQKIIDAAIDTISDCFQGEGTDDRVELQIVRALSSCILEEDSSSLCHGASLLKAIRTIYNVFVFSLNPSNQGIAQATLTQIISSVYDKIDLKQSTSSAVSLSTKNHQQQSAIELSEASENAETPAPLTLENMDKLNDDEERLMDAQQPDSIAITNQDLAVKDAFLVFRVMAKICAKPLETELDMRSHAVRSKLLSLHIIYSIIKDHIDVFLSHNIFLPGKERVCFIDSIRQYLRLVLSRNAASPLAPVFEVTLEIMWLLIANLRADFVKEIPVFLTEIYFPISELTTSTSQQKRYFLSVIQRICNDPRTLVEFYLNYDCNPGMPNVMEITVDYLTRLALTRVEITQTQRSYYDEQISKSLSTYNFSQLPLLTSSNLSSSPDVGQVNLLFPLDFALKMVSLNCIVSVLRSLSSWAHKALNPNTHTANKVLLNTTSSARQESRSSLSNDVRSSIMTSNDDFKPTYEDEESRSLSSQNIDADDPTQFENLKLRKTALSECIAIFNNKPKKAIPVLIKKGFLKDDSPISIAKWLLETEGLDMAAVGDYLGEGDDKNIAIMHAFVDEFDFTGMSIVDALRSFLQSFRLPGEGQKIDRFMLKFAERFVDQNPGVFSKADTAYVLSYSLIMLNTDLHSSQIKNKMSLQEFLENNEGIDNGRDLPRDFLEGLFNEIANNEIKLISEQHQAMLSGDTNLVQQQQSAFNFFNSRDLTREAYNQVSKEISSKTELVFKNLNKNKGGPDVYYAASHVEHVKSIFETLWMSFLAALTPPFKDYDDIDTTNKCLEGLKISIKIASTFRINDARTSFVGALVQFCNLQNLEEIKVKNVNAMVILLEVALSEGNYLEGSWKDILLVVSQMERLQLISKGIDRDTVPDVAQARVANPRVSYESSRSNNTSFFDVWGKKATPTELAQEKHHNQTLSPEISKFISSSELVVLMDNIFTKSSELSGNAIVDFIKALTAVSLEEIESSENASTPRMFSLQKMVDVCYYNMDRIKLEWTPLWAVMGKAFNKIATNSNLAVVFFAIDSLRQLSMRFLDIEELSGFEFQHDFLKPFEYTVQNSGNTEVQEMIIECFRNFILTKSESIKSGWKPILESLQYTARSSTESIVLKTQLLVSNDIVTNHFENVFSQEDAFSELVGVFREITKNKRFQKLSLHALESLRKMTQNVADICFYNENKTEEERKHNDALLRGKDIFQDVWFPMLFCFNDTIMTAEDLEVRSRALNYMFDALVAYGGKFNDDFWEKICKKLLFPIFGVLSKHWEVNQFNSHDDLSVWLSTTLIQALRNLIALFTHYFESLNRMLDGFLGLLVSCICQENDTIARIGRSCLQQLILQNVSKFNEYHWNQIGDVFDKLFDLTTANELFDYDPLQQGRKSSVSHHQTTNDTSQHSDDDSNDRRENDSNISETVERAHQEESSEDVGGDMVETLNGQTKLNNGNSVPTVKDELNPKPASLSIPKKTKHMKRNESNEDIRRRINIKNSIVVKCVLQLLMIELLNELFENEDFAHCIPYKEAIRITRLLEKSYEFSRDFNEDYGLRTRLVEARVVDKIPNLLKQETSAAAVLLDIMFQLYLNDDEKKADLITRLITICIQVVEGYVSLDDRTMERSINAWRSVIVEILQGYYEFDDEDFRLYCPAMYALVIQILDKSVPTELRHAIKQFLSRVGELYLSTD.

The tract at residues 1 to 220 (MSEQNSVVNA…ISLSSNGSNT (220 aa)) is disordered. Over residues 17–33 (ISSNVETASSVNPSVKP) the composition is skewed to polar residues. Basic and acidic residues predominate over residues 37-53 (IKEEAKETNGEDQKCKG). Residues 91 to 118 (EGEDGDEDEDEDEDEDEDNGDEDDEDVD) are compositionally biased toward acidic residues. Residues 134–143 (SVSGESTESS) show a composition bias toward low complexity. Over residues 144-154 (SGEDEESDESD) the composition is skewed to acidic residues. Residues 155 to 165 (GNTSNSSSGDE) show a composition bias toward low complexity. Residues 166-184 (SGSEEEEEEEEEEEEEENA) are compositionally biased toward acidic residues. A compositionally biased stretch (polar residues) spans 194-209 (SVPTNDSTAPRSTHTR). Low complexity predominate over residues 210 to 220 (NISLSSNGSNT). Residues Ser212 and Ser215 each carry the phosphoserine modification. Thr334 carries the post-translational modification Phosphothreonine. 3 positions are modified to phosphoserine: Ser447, Ser452, and Ser455. The HUS box motif lies at 653 to 657 (NYDCN). Residues 771–788 (SSARQESRSSLSNDVRSS) are compositionally biased toward low complexity. Residues 771-814 (SSARQESRSSLSNDVRSSIMTSNDDFKPTYEDEESRSLSSQNID) form a disordered region. Lys797 is covalently cross-linked (Glycyl lysine isopeptide (Lys-Gly) (interchain with G-Cter in ubiquitin)). Position 807 is a phosphoserine (Ser807). The SEC7 domain occupies 824 to 1010 (LKLRKTALSE…LFNEIANNEI (187 aa)). A Mg(2+)-binding site is contributed by Asp940. Residues 1017-1220 (HQAMLSGDTN…QARVANPRVS (204 aa)) are HDS1 domain. At Ser1226 the chain carries Phosphoserine. Thr1240 bears the Phosphothreonine mark. Residues 1708-1723 (GRKSSVSHHQTTNDTS) are compositionally biased toward polar residues. A disordered region spans residues 1708-1803 (GRKSSVSHHQ…KKTKHMKRNE (96 aa)). A compositionally biased stretch (basic and acidic residues) spans 1724–1751 (QHSDDDSNDRRENDSNISETVERAHQEE). Ser1741 and Ser1752 each carry phosphoserine. Over residues 1764-1777 (LNGQTKLNNGNSVP) the composition is skewed to polar residues. The interval 1836-1883 (FENEDFAHCIPYKEAIRITRLLEKSYEFSRDFNEDYGLRTRLVEARVV) is C2 domain-interacting region (CIR).

Interacts with ARF1. Interacts (via C-terminus) with RSP5 ubiquitin ligase.

It localises to the cytoplasm. It is found in the golgi apparatus. Its subcellular location is the trans-Golgi network. The protein resides in the cytoplasmic vesicle. The protein localises to the COPI-coated vesicle membrane. It localises to the COPII-coated vesicle membrane. In terms of biological role, guanine exchange factor that acts as an activator of ARF1 at the trans-Golgi network and is thus involved in vesicular budding and traffic between compartments of the Golgi apparatus. Activation of Arf (ADP-ribosylation factor) GTPases is essential for vesicle formation via recruitment of cargo adapters and coat proteins necessary for Golgi trafficking. Also plays an essential role in ER-to-Golgi traffic. SEC7 also acts as an effector of two Rab GTPases, YPT1 and YPT31/32. This chain is ADP-ribosylation factor guanine nucleotide-exchange factor SEC7, found in Saccharomyces cerevisiae (strain ATCC 204508 / S288c) (Baker's yeast).